A 256-amino-acid polypeptide reads, in one-letter code: H-2 class II histocompatibility antigen, A-B alpha chain (256 aa).

The N-terminal stretch at 1 to 23 (MPRSRALILGVLALTTMLSLCGG) is a signal peptide. Residues 24–111 (EDDIEADHVG…KRSNSTPATN (88 aa)) form an alpha-1 region. Over 24–218 (EDDIEADHVG…IPAPMSELTE (195 aa)) the chain is Extracellular. The tract at residues 112–205 (EAPQATVFPK…GLEEPVLKHW (94 aa)) is alpha-2. In terms of domain architecture, Ig-like C1-type spans 114–206 (PQATVFPKSP…LEEPVLKHWE (93 aa)). A disulfide bond links cysteine 134 and cysteine 190. The N-linked (GlcNAc...) asparagine glycan is linked to asparagine 145. The segment at 206–218 (EPEIPAPMSELTE) is connecting peptide. The chain crosses the membrane as a helical span at residues 219-244 (TVVCALGLSVGLVGIVVGTIFIIQGL). Topologically, residues 245-256 (RSGGTSRHPGPL) are cytoplasmic.

It belongs to the MHC class II family.

It is found in the membrane. The polypeptide is H-2 class II histocompatibility antigen, A-B alpha chain (H2-Aa) (Mus musculus (Mouse)).